Here is a 298-residue protein sequence, read N- to C-terminus: N-acetylmuramic acid 6-phosphate etherase (298 aa).

Positions 55 to 218 (IHAQVSGGGR…STGLMIKSGK (164 aa)) constitute an SIS domain. Glu83 (proton donor) is an active-site residue. Glu114 is an active-site residue.

Belongs to the GCKR-like family. MurNAc-6-P etherase subfamily. In terms of assembly, homodimer.

The catalysed reaction is N-acetyl-D-muramate 6-phosphate + H2O = N-acetyl-D-glucosamine 6-phosphate + (R)-lactate. The protein operates within amino-sugar metabolism; 1,6-anhydro-N-acetylmuramate degradation. Its pathway is amino-sugar metabolism; N-acetylmuramate degradation. It functions in the pathway cell wall biogenesis; peptidoglycan recycling. Its function is as follows. Specifically catalyzes the cleavage of the D-lactyl ether substituent of MurNAc 6-phosphate, producing GlcNAc 6-phosphate and D-lactate. Together with AnmK, is also required for the utilization of anhydro-N-acetylmuramic acid (anhMurNAc) either imported from the medium or derived from its own cell wall murein, and thus plays a role in cell wall recycling. This is N-acetylmuramic acid 6-phosphate etherase from Escherichia coli O8 (strain IAI1).